A 376-amino-acid chain; its full sequence is Succinyl-diaminopimelate desuccinylase (376 aa).

H66 contributes to the Zn(2+) binding site. The active site involves D68. A Zn(2+)-binding site is contributed by D99. The active-site Proton acceptor is E133. The Zn(2+) site is built by E134, E162, and H348.

This sequence belongs to the peptidase M20A family. DapE subfamily. Homodimer. Zn(2+) serves as cofactor. The cofactor is Co(2+).

It catalyses the reaction N-succinyl-(2S,6S)-2,6-diaminopimelate + H2O = (2S,6S)-2,6-diaminopimelate + succinate. It participates in amino-acid biosynthesis; L-lysine biosynthesis via DAP pathway; LL-2,6-diaminopimelate from (S)-tetrahydrodipicolinate (succinylase route): step 3/3. Functionally, catalyzes the hydrolysis of N-succinyl-L,L-diaminopimelic acid (SDAP), forming succinate and LL-2,6-diaminopimelate (DAP), an intermediate involved in the bacterial biosynthesis of lysine and meso-diaminopimelic acid, an essential component of bacterial cell walls. The polypeptide is Succinyl-diaminopimelate desuccinylase (Xanthomonas oryzae pv. oryzae (strain PXO99A)).